A 283-amino-acid chain; its full sequence is 4-diphosphocytidyl-2-C-methyl-D-erythritol kinase (283 aa).

Lysine 10 is a catalytic residue. Position 99 to 109 (99 to 109 (PMGGGLGGGSS)) interacts with ATP. Residue aspartate 141 is part of the active site.

Belongs to the GHMP kinase family. IspE subfamily. Homodimer.

It carries out the reaction 4-CDP-2-C-methyl-D-erythritol + ATP = 4-CDP-2-C-methyl-D-erythritol 2-phosphate + ADP + H(+). It functions in the pathway isoprenoid biosynthesis; isopentenyl diphosphate biosynthesis via DXP pathway; isopentenyl diphosphate from 1-deoxy-D-xylulose 5-phosphate: step 3/6. Catalyzes the phosphorylation of the position 2 hydroxy group of 4-diphosphocytidyl-2C-methyl-D-erythritol. This is 4-diphosphocytidyl-2-C-methyl-D-erythritol kinase from Escherichia coli O81 (strain ED1a).